Here is a 427-residue protein sequence, read N- to C-terminus: UDP-N-acetyl-D-mannosamine dehydrogenase (427 aa).

Residues Y19, I20, D39, R44, T91, and T130 each coordinate NAD(+). Residues R155, V156, K207, N211, R214, H245, R247, and G258 each contribute to the UDP-N-acetyl-alpha-D-mannosaminouronate site. K207 acts as the Proton donor/acceptor in catalysis. Catalysis depends on C261, which acts as the Nucleophile. UDP-N-acetyl-alpha-D-mannosaminouronate is bound by residues Y318 and K319. R326 is an NAD(+) binding site. K404 serves as a coordination point for UDP-N-acetyl-alpha-D-mannosaminouronate.

This sequence belongs to the UDP-glucose/GDP-mannose dehydrogenase family. Homotetramer; probably dimer of dimers.

The catalysed reaction is UDP-N-acetyl-alpha-D-mannosamine + 2 NAD(+) + H2O = UDP-N-acetyl-alpha-D-mannosaminouronate + 2 NADH + 3 H(+). Catalyzes the four-electron oxidation of UDP-N-acetyl-D-mannosamine (UDP-ManNAc), reducing NAD(+) and releasing UDP-N-acetylmannosaminuronic acid (UDP-ManNAcA). The protein is UDP-N-acetyl-D-mannosamine dehydrogenase (wecC) of Methanococcus maripaludis (strain C7 / ATCC BAA-1331).